The chain runs to 777 residues: B3 domain-containing protein REM-like 1 (777 aa).

The segment at residues 97–193 is a DNA-binding region (TF-B3 1); sequence FVTFTLAPVD…TPVLSLCFEE (97 aa). Disordered regions lie at residues 200 to 248 and 344 to 391; these read VGEE…TSPS and KSSS…ESSS. The segment covering 218 to 243 has biased composition (basic and acidic residues); that stretch reads KIVKDDNNKDESSTWKREGNHLRCKD. The TF-B3 2 DNA-binding region spans 252–347; it reads TLTVTITPDS…TPVLSIKSSS (96 aa). The span at 344–368 shows a compositional bias: polar residues; the sequence is KSSSGKGQSEFSKESLSIKPSSGNM. Over residues 370–388 the composition is skewed to basic and acidic residues; sequence KKVENNREASRKYPPRSRE. 2 consecutive DNA-binding regions (TF-B3) follow at residues 582-676 and 683-777; these read FLTL…RDSS and FLTL…FYTK.

Its subcellular location is the nucleus. The protein is B3 domain-containing protein REM-like 1 of Arabidopsis thaliana (Mouse-ear cress).